Reading from the N-terminus, the 139-residue chain is MRHGIAGRKFNRTTSHRLAMFSNMANALIKHEQIKTTLPKAKDLRPIVERLITLGKKGGLANKRLAYAELRDHDMVEKLFTTLAERYKGRPGGYTRVLKAGFRYGDAAPMGVIELVDRDPEAKGQDSGPVEIKDESEEG.

Residues 117-139 (DRDPEAKGQDSGPVEIKDESEEG) form a disordered region.

This sequence belongs to the bacterial ribosomal protein bL17 family. As to quaternary structure, part of the 50S ribosomal subunit. Contacts protein L32.

This Rhodospirillum centenum (strain ATCC 51521 / SW) protein is Large ribosomal subunit protein bL17.